Here is a 164-residue protein sequence, read N- to C-terminus: MQKQHQRQHKVELVANLKSQFDSAKALLICDYKGLSVKKLEALRNKARIQGIKVQVIKNTLAHIAMKEVGCADLDLKETNVFLWGDDQIALSKLVFDFQKEHKDHFVLKAGLFDKESVSVAHVEAVSKLPSKEELMGMLLSVWTAPARYFVTGLDNLRKAKEEN.

The protein belongs to the universal ribosomal protein uL10 family. Part of the ribosomal stalk of the 50S ribosomal subunit. The N-terminus interacts with L11 and the large rRNA to form the base of the stalk. The C-terminus forms an elongated spine to which L12 dimers bind in a sequential fashion forming a multimeric L10(L12)X complex.

Forms part of the ribosomal stalk, playing a central role in the interaction of the ribosome with GTP-bound translation factors. The polypeptide is Large ribosomal subunit protein uL10 (rplJ) (Helicobacter pylori (strain J99 / ATCC 700824) (Campylobacter pylori J99)).